Reading from the N-terminus, the 454-residue chain is Exopolyphosphatase PRUNE1 (454 aa).

An N-acetylmethionine modification is found at Met-1. 4 residues coordinate Mn(2+): Asp-28, Asp-30, Asp-106, and Asp-179. Positions 106 to 108 (DHH) match the DHH motif motif. Residues 394–421 (SLISGLSQDEEDPPLPPTPMNSLVDECP) form an essential for homodimerization region. The disordered stretch occupies residues 397–420 (SGLSQDEEDPPLPPTPMNSLVDEC). At Ser-400 the chain carries Phosphoserine. Thr-411 carries the phosphothreonine modification. Ser-415 carries the phosphoserine modification.

This sequence belongs to the PPase class C family. Prune subfamily. As to quaternary structure, homooligomer. Able to homodimerize via its C-terminal domain. Interacts with NME1. Interacts with GSK3; at focal adhesion complexes where paxillin and vinculin are colocalized. Interacts with alpha and beta tubulin. Requires Mn(2+) as cofactor.

Its subcellular location is the cytoplasm. It localises to the nucleus. The protein resides in the cell junction. The protein localises to the focal adhesion. The enzyme catalyses diphosphate + H2O = 2 phosphate + H(+). With respect to regulation, activated by magnesium ions and inhibited by manganese ions. Inhibited by dipyridamole, moderately sensitive to IBMX and inhibited by vinpocetine. In terms of biological role, phosphodiesterase (PDE) that has higher activity toward cAMP than cGMP, as substrate. Plays a role in cell proliferation, migration and differentiation, and acts as a negative regulator of NME1. Plays a role in the regulation of neurogenesis. Involved in the regulation of microtubule polymerization. The polypeptide is Exopolyphosphatase PRUNE1 (Prune1) (Mus musculus (Mouse)).